We begin with the raw amino-acid sequence, 199 residues long: dITP/XTP pyrophosphatase (199 aa).

A substrate-binding site is contributed by 7-12 (TGNKGK). Asp-71 serves as the catalytic Proton acceptor. Mg(2+) is bound at residue Asp-71. Substrate is bound by residues Ala-72, 154–157 (FGYD), Lys-177, and 182–183 (HR).

This sequence belongs to the HAM1 NTPase family. As to quaternary structure, homodimer. Mg(2+) serves as cofactor.

The catalysed reaction is XTP + H2O = XMP + diphosphate + H(+). It catalyses the reaction dITP + H2O = dIMP + diphosphate + H(+). The enzyme catalyses ITP + H2O = IMP + diphosphate + H(+). In terms of biological role, pyrophosphatase that catalyzes the hydrolysis of nucleoside triphosphates to their monophosphate derivatives, with a high preference for the non-canonical purine nucleotides XTP (xanthosine triphosphate), dITP (deoxyinosine triphosphate) and ITP. Seems to function as a house-cleaning enzyme that removes non-canonical purine nucleotides from the nucleotide pool, thus preventing their incorporation into DNA/RNA and avoiding chromosomal lesions. The sequence is that of dITP/XTP pyrophosphatase from Bdellovibrio bacteriovorus (strain ATCC 15356 / DSM 50701 / NCIMB 9529 / HD100).